The chain runs to 1077 residues: Hemoglobin and hemoglobin-haptoglobin-binding protein A (1077 aa).

Positions 1 to 24 (MTNFRLNVLAYSVMLGLTASVAYA) are cleaved as a signal peptide. A disordered region spans residues 25-72 (EPTNQPTNQPTNQPTNQPTNQPTNQPTNQPTNQPTNQPTNQPTNQNSN). A run of 11 repeats spans residues 26 to 29 (PTNQ), 30 to 33 (PTNQ), 34 to 37 (PTNQ), 38 to 41 (PTNQ), 42 to 45 (PTNQ), 46 to 49 (PTNQ), 50 to 53 (PTNQ), 54 to 57 (PTNQ), 58 to 61 (PTNQ), 62 to 65 (PTNQ), and 66 to 69 (PTNQ). The 11 X 4 AA tandem repeats of P-T-N-Q stretch occupies residues 26–69 (PTNQPTNQPTNQPTNQPTNQPTNQPTNQPTNQPTNQPTNQPTNQ). Low complexity predominate over residues 26-70 (PTNQPTNQPTNQPTNQPTNQPTNQPTNQPTNQPTNQPTNQPTNQN). The short motif at 78–85 (EQINVSGS) is the TonB box element. Positions 89–216 (TDTKAPPKIA…LGGSVSLDTK (128 aa)) constitute a TBDR plug domain. The region spanning 224–1077 (NKNYYASYKR…NYRMSVQFEF (854 aa)) is the TBDR beta-barrel domain. A TonB C-terminal box motif is present at residues 1060-1077 (NRFYAPERNYRMSVQFEF).

This sequence belongs to the TonB-dependent receptor family. Hemoglobin/haptoglobin binding protein subfamily.

The protein resides in the cell outer membrane. Acts as a receptor for hemoglobin or the hemoglobin/haptoglobin complex of the human host and is required for heme uptake. The polypeptide is Hemoglobin and hemoglobin-haptoglobin-binding protein A (hgpA) (Haemophilus influenzae).